Here is a 248-residue protein sequence, read N- to C-terminus: Transcription factor cicD (248 aa).

Residues 1-22 (MVGSRHPDQCAKRWHHSLDPNV) show a composition bias toward basic and acidic residues. Residues 1–25 (MVGSRHPDQCAKRWHHSLDPNVKRG) form a disordered region. One can recognise an HTH myb-type domain in the interval 19–74 (DPNVKRGPWTMEEDSSLLEAVQKIGRDWKEIGRELFPSRSTTDIKNRYVILSRRRG). Positions 46 to 70 (WKEIGRELFPSRSTTDIKNRYVILS) form a DNA-binding region, H-T-H motif. The segment at 186 to 208 (SELEGSFTSRNHEEPPQPLPVPD) is disordered.

The protein localises to the nucleus. Transcription factor that regulates the expression of the gene cluster that mediates the biosynthesis of cichorine, a phytotoxin active against knapweed, corn, and soybeans. The chain is Transcription factor cicD from Emericella nidulans (strain FGSC A4 / ATCC 38163 / CBS 112.46 / NRRL 194 / M139) (Aspergillus nidulans).